The primary structure comprises 362 residues: DNA replication and repair protein RecF (362 aa).

30–37 (GDNAQGKT) serves as a coordination point for ATP.

It belongs to the RecF family.

It is found in the cytoplasm. In terms of biological role, the RecF protein is involved in DNA metabolism; it is required for DNA replication and normal SOS inducibility. RecF binds preferentially to single-stranded, linear DNA. It also seems to bind ATP. In Agathobacter rectalis (strain ATCC 33656 / DSM 3377 / JCM 17463 / KCTC 5835 / VPI 0990) (Eubacterium rectale), this protein is DNA replication and repair protein RecF.